The following is a 239-amino-acid chain: Vesicle-associated protein 1-2 (239 aa).

Position 1 is an N-acetylmethionine (Met1). The Cytoplasmic segment spans residues Met1–Gly215. Ser2 carries the post-translational modification N-acetylserine; in Vesicle-associated protein 1-2, N-terminally processed. One can recognise an MSP domain in the interval Leu5–Val125. Residues Val123 to Ser174 are disordered. Ser132 is modified (phosphoserine). The segment covering Glu140 to Asp156 has biased composition (polar residues). Position 164 is a phosphoserine (Ser164). Positions Asp169–Gly215 form a coiled coil. Residues Gly216–Met236 form a helical; Anchor for type IV membrane protein membrane-spanning segment.

Belongs to the VAMP-associated protein (VAP) (TC 9.B.17) family. Interacts with ORP3A. Binds to VLG at the endomembrane system.

The protein resides in the endoplasmic reticulum membrane. Vesicle-associated protein that binds the oxysterol-binding protein ORP3A and allows its targeting to the ER. This chain is Vesicle-associated protein 1-2, found in Arabidopsis thaliana (Mouse-ear cress).